Here is a 514-residue protein sequence, read N- to C-terminus: tRNA-2-methylthio-N(6)-dimethylallyladenosine synthase (514 aa).

The interval 1–21 (MNEEQRKASSVDVLAERDKKA) is disordered. An MTTase N-terminal domain is found at 68-186 (RTFLIKTYGC…LPEILEEAYL (119 aa)). Residues Cys77, Cys113, Cys147, Cys223, Cys227, and Cys230 each coordinate [4Fe-4S] cluster. A Radical SAM core domain is found at 209 to 440 (REGNIKAWVN…KKVGHYSQIA (232 aa)). A TRAM domain is found at 442-505 (SKYEGQTVTV…QYSLNGSFIK (64 aa)).

The protein belongs to the methylthiotransferase family. MiaB subfamily. In terms of assembly, monomer. [4Fe-4S] cluster serves as cofactor.

The protein localises to the cytoplasm. The catalysed reaction is N(6)-dimethylallyladenosine(37) in tRNA + (sulfur carrier)-SH + AH2 + 2 S-adenosyl-L-methionine = 2-methylsulfanyl-N(6)-dimethylallyladenosine(37) in tRNA + (sulfur carrier)-H + 5'-deoxyadenosine + L-methionine + A + S-adenosyl-L-homocysteine + 2 H(+). Its function is as follows. Catalyzes the methylthiolation of N6-(dimethylallyl)adenosine (i(6)A), leading to the formation of 2-methylthio-N6-(dimethylallyl)adenosine (ms(2)i(6)A) at position 37 in tRNAs that read codons beginning with uridine. In Staphylococcus aureus (strain USA300 / TCH1516), this protein is tRNA-2-methylthio-N(6)-dimethylallyladenosine synthase.